A 526-amino-acid polypeptide reads, in one-letter code: 2-succinyl-5-enolpyruvyl-6-hydroxy-3-cyclohexene-1-carboxylate synthase (526 aa).

Belongs to the TPP enzyme family. MenD subfamily. As to quaternary structure, homodimer. Mg(2+) serves as cofactor. Mn(2+) is required as a cofactor. It depends on thiamine diphosphate as a cofactor.

It carries out the reaction isochorismate + 2-oxoglutarate + H(+) = 5-enolpyruvoyl-6-hydroxy-2-succinyl-cyclohex-3-ene-1-carboxylate + CO2. It functions in the pathway quinol/quinone metabolism; 1,4-dihydroxy-2-naphthoate biosynthesis; 1,4-dihydroxy-2-naphthoate from chorismate: step 2/7. It participates in quinol/quinone metabolism; menaquinone biosynthesis. Catalyzes the thiamine diphosphate-dependent decarboxylation of 2-oxoglutarate and the subsequent addition of the resulting succinic semialdehyde-thiamine pyrophosphate anion to isochorismate to yield 2-succinyl-5-enolpyruvyl-6-hydroxy-3-cyclohexene-1-carboxylate (SEPHCHC). The sequence is that of 2-succinyl-5-enolpyruvyl-6-hydroxy-3-cyclohexene-1-carboxylate synthase from Bdellovibrio bacteriovorus (strain ATCC 15356 / DSM 50701 / NCIMB 9529 / HD100).